The chain runs to 125 residues: Probable 4-amino-4-deoxy-L-arabinose-phosphoundecaprenol flippase subunit ArnF (125 aa).

The Cytoplasmic segment spans residues 1-2; sequence MG. The chain crosses the membrane as a helical span at residues 3–23; it reads VMWGLISVAIASLAQLSLGFA. Residues 24 to 33 are Periplasmic-facing; sequence MMRLPSIAHP. The chain crosses the membrane as a helical span at residues 34–54; that stretch reads LAFISGLGALNAATLALFAGL. The Cytoplasmic segment spans residues 55 to 76; that stretch reads AGYLVSVFCWHKTLHTLALSKA. The chain crosses the membrane as a helical span at residues 77–97; the sequence is YALLSLSYVLVWVASMLLPGL. At 98 to 100 the chain is on the periplasmic side; the sequence is QGA. A helical membrane pass occupies residues 101 to 121; that stretch reads FSLKAMLGVLCIMAGVMLIFL. At 122 to 125 the chain is on the cytoplasmic side; that stretch reads PARS.

It belongs to the ArnF family. As to quaternary structure, heterodimer of ArnE and ArnF.

The protein resides in the cell inner membrane. It participates in bacterial outer membrane biogenesis; lipopolysaccharide biosynthesis. Translocates 4-amino-4-deoxy-L-arabinose-phosphoundecaprenol (alpha-L-Ara4N-phosphoundecaprenol) from the cytoplasmic to the periplasmic side of the inner membrane. This Salmonella agona (strain SL483) protein is Probable 4-amino-4-deoxy-L-arabinose-phosphoundecaprenol flippase subunit ArnF.